Consider the following 248-residue polypeptide: Pulmonary surfactant-associated protein A (248 aa).

The first 20 residues, 1 to 20 (MSLGSLAFTLFLTVVAGIKC), serve as a signal peptide directing secretion. N-linked (GlcNAc...) asparagine glycosylation is present at asparagine 21. Residues 28-100 (GSPGIPGTPG…PGERGLPGFP (73 aa)) enclose the Collagen-like domain. The interval 28 to 100 (GSPGIPGTPG…PGERGLPGFP (73 aa)) is disordered. A 4-hydroxyproline mark is found at proline 30, proline 33, proline 36, proline 42, proline 54, proline 57, proline 63, proline 67, proline 70, and proline 76. Residues 42–51 (PGRDGRDGIK) show a composition bias toward basic and acidic residues. Positions 54–65 (PGPPGPMGPPGG) are enriched in pro residues. Residues 69–82 (LPGRDGLPGAPGAP) show a composition bias toward low complexity. A compositionally biased stretch (basic and acidic residues) spans 84-93 (EHGDKGEPGE). Residues 132–248 (LSVGDKVFST…LQYRLAICEF (117 aa)) enclose the C-type lectin domain. Cystine bridges form between cysteine 155-cysteine 246 and cysteine 224-cysteine 238. The N-linked (GlcNAc...) asparagine glycan is linked to asparagine 207. Glutamate 215, arginine 217, asparagine 234, and aspartate 235 together coordinate Ca(2+).

The protein belongs to the SFTPA family. As to quaternary structure, oligomeric complex of 6 set of homotrimers.

Its subcellular location is the secreted. It is found in the extracellular space. The protein resides in the extracellular matrix. It localises to the surface film. In presence of calcium ions, it binds to surfactant phospholipids and contributes to lower the surface tension at the air-liquid interface in the alveoli of the mammalian lung and is essential for normal respiration. Enhances the expression of MYO18A/SP-R210 on alveolar macrophages. The polypeptide is Pulmonary surfactant-associated protein A (Sftpa1) (Mus musculus (Mouse)).